We begin with the raw amino-acid sequence, 91 residues long: MANTSSAKKATRKIARRTEVNKARRSRVRTFVRQVEEAIASGDATLAKEAFLAAQPELARAATKGVLHANTASRKVSRLAKRVKALSAPTA.

The interval 1 to 23 (MANTSSAKKATRKIARRTEVNKA) is disordered.

This sequence belongs to the bacterial ribosomal protein bS20 family.

Its function is as follows. Binds directly to 16S ribosomal RNA. The sequence is that of Small ribosomal subunit protein bS20 from Rhizobium rhizogenes (strain K84 / ATCC BAA-868) (Agrobacterium radiobacter).